Consider the following 123-residue polypeptide: Protein Wnt-3b (123 aa).

Residue S1 is the site of O-palmitoleoyl serine; by PORCN attachment. C89 and C104 are oxidised to a cystine. N90 carries N-linked (GlcNAc...) asparagine glycosylation.

The protein belongs to the Wnt family. In terms of processing, palmitoleoylation is required for efficient binding to frizzled receptors. Depalmitoleoylation leads to Wnt signaling pathway inhibition.

Its subcellular location is the secreted. It localises to the extracellular space. The protein resides in the extracellular matrix. Functionally, ligand for members of the frizzled family of seven transmembrane receptors. Probable developmental protein. May be a signaling molecule which affects the development of discrete regions of tissues. Is likely to signal over only few cell diameters. The protein is Protein Wnt-3b (WNT-3B) of Alopias vulpinus (Common thresher shark).